Reading from the N-terminus, the 250-residue chain is Isoprenyl transferase (250 aa).

D26 is an active-site residue. Position 26 (D26) interacts with Mg(2+). Residues 27-30 (GNGR), W31, R39, H43, and 71-73 (STE) each bind substrate. N74 (proton acceptor) is an active-site residue. Substrate-binding positions include W75, R77, R198, and 204-206 (RLS). A Mg(2+)-binding site is contributed by E217.

This sequence belongs to the UPP synthase family. As to quaternary structure, homodimer. Requires Mg(2+) as cofactor.

In terms of biological role, catalyzes the condensation of isopentenyl diphosphate (IPP) with allylic pyrophosphates generating different type of terpenoids. In Streptococcus agalactiae serotype V (strain ATCC BAA-611 / 2603 V/R), this protein is Isoprenyl transferase.